The following is a 69-amino-acid chain: Dodecin (69 aa).

3–5 is a binding site for FMN; that stretch reads KVY. CoA contacts are provided by residues K6, R28, and 32-34; that span reads TLR. D37, W38, R45, Q57, and R65 together coordinate FMN. 65-67 provides a ligand contact to CoA; sequence RLE.

This sequence belongs to the dodecin family. Homododecamer; four homotrimers assemble to form a dodecameric hollow sphere with an outer diameter of about 60 Angstroms. Flavin dimers are bound between subunits with a stoichiometry of 6 flavin dimers per dodecamer. Besides, trimeric coenzyme A molecules can be bound between subunits. A dodecamer can bind simultaneously 12 flavin and 12 coenzyme A molecules.

Its function is as follows. May function as storage protein that sequesters various flavins and other cofactors, thereby protecting the cell against undesirable reactions mediated by the free cofactors. Binds and sequesters FMN, FAD, lumiflavin and lumichrome, and can also bind coenzyme A. This Thermus thermophilus (strain ATCC 27634 / DSM 579 / HB8) protein is Dodecin.